The primary structure comprises 162 residues: Putative pre-16S rRNA nuclease (162 aa).

It belongs to the YqgF nuclease family.

It is found in the cytoplasm. Could be a nuclease involved in processing of the 5'-end of pre-16S rRNA. This chain is Putative pre-16S rRNA nuclease, found in Brucella abortus (strain S19).